The following is a 415-amino-acid chain: D-galactonate dehydratase family member RspA (415 aa).

Substrate contacts are provided by Asn-48 and His-133. Residue Tyr-170 is the Proton donor/acceptor of the active site. A Mg(2+)-binding site is contributed by Asp-223. Residue His-225 is the Proton donor/acceptor of the active site. Mg(2+) is bound by residues Glu-249, Asp-250, and Glu-275. Substrate is bound by residues Glu-275, Arg-296, His-325, Asp-329, and Glu-352.

It belongs to the mandelate racemase/muconate lactonizing enzyme family. GalD subfamily. The cofactor is Mg(2+).

It catalyses the reaction D-mannonate = 2-dehydro-3-deoxy-D-gluconate + H2O. In terms of biological role, has low D-mannonate dehydratase activity (in vitro), suggesting that this is not a physiological substrate and that it has no significant role in D-mannonate degradation in vivo. Has no detectable activity with a panel of 70 other acid sugars (in vitro). In Escherichia coli O6:H1 (strain CFT073 / ATCC 700928 / UPEC), this protein is D-galactonate dehydratase family member RspA (rspA).